The chain runs to 513 residues: Matrix metalloproteinase-27 (513 aa).

Positions 1–17 (MKRLLLLFLFFITFSSA) are cleaved as a signal peptide. Residues 18–98 (FPLVRMTENE…PRCGVPDVGQ (81 aa)) constitute a propeptide, activation peptide. Residue Asn55 is glycosylated (N-linked (GlcNAc...) asparagine). The Cysteine switch motif lies at 89-96 (PRCGVPDV). Residue Cys91 coordinates Zn(2+). N-linked (GlcNAc...) asparagine glycosylation is present at Asn110. Asp121 and Asp155 together coordinate Ca(2+). Residue His165 coordinates Zn(2+). Ca(2+)-binding residues include Asp173, Gly174, and Val178. Residue His181 participates in Zn(2+) binding. Residues Gly188 and Asp192 each coordinate Ca(2+). His194 serves as a coordination point for Zn(2+). Residues Asp196 and Glu199 each coordinate Ca(2+). His216 is a Zn(2+) binding site. Glu217 is a catalytic residue. 2 residues coordinate Zn(2+): His220 and His226. Hemopexin repeat units follow at residues 276-325 (PHAC…WPSL), 326-371 (PADL…GFPG), 373-421 (VKKI…FPGI), and 422-465 (SIRV…WFQC). Cys279 and Cys465 are joined by a disulfide. Asp286 contacts Ca(2+). Residues Asp377 and Asp426 each contribute to the Ca(2+) site. Residue Asn452 is glycosylated (N-linked (GlcNAc...) asparagine). Positions 466-513 (KEPKNSSFGFDINKEKAHSGGIKILYHKSLSLFIFGIVHLLKNTSIYQ) are required for retention in the endoplasmic reticulum.

The protein belongs to the peptidase M10A family. The cofactor is Ca(2+). Zn(2+) serves as cofactor. In terms of processing, N-glycosylated. In terms of tissue distribution, expressed in B-cells. Expressed in a subset of endometrial macrophages related to menstruation and in ovarian and peritoneal endometriotic lesions (at protein level).

Its subcellular location is the endoplasmic reticulum. Its function is as follows. Matrix metalloproteinases degrade protein components of the extracellular matrix such as fibronectin, laminin, gelatins and/or collagens. The polypeptide is Matrix metalloproteinase-27 (MMP27) (Homo sapiens (Human)).